We begin with the raw amino-acid sequence, 311 residues long: Probable manganese-dependent inorganic pyrophosphatase (311 aa).

Mn(2+) is bound by residues His-9, Asp-13, Asp-15, Asp-77, His-99, and Asp-151.

This sequence belongs to the PPase class C family. Requires Mn(2+) as cofactor.

The protein localises to the cytoplasm. The enzyme catalyses diphosphate + H2O = 2 phosphate + H(+). The sequence is that of Probable manganese-dependent inorganic pyrophosphatase from Streptococcus equi subsp. zooepidemicus (strain MGCS10565).